Here is a 153-residue protein sequence, read N- to C-terminus: UPF0756 membrane protein BCB4264_A4705 (153 aa).

The next 4 helical transmembrane spans lie at 8 to 28 (FLFI…TVAI), 54 to 74 (LGVT…EIGF), 87 to 107 (WIAL…VQLL), and 117 to 137 (LVFG…GPLI).

This sequence belongs to the UPF0756 family.

It localises to the cell membrane. This Bacillus cereus (strain B4264) protein is UPF0756 membrane protein BCB4264_A4705.